We begin with the raw amino-acid sequence, 465 residues long: Citrate synthase-like protein (465 aa).

Positions 13–40 (HISDMVDSTKMNGNQSQDTAGRADTPVS) are disordered. The segment covering 21–31 (TKMNGNQSQDT) has biased composition (polar residues). Active-site residues include His-357 and Asp-413.

This sequence belongs to the citrate synthase family.

The protein operates within secondary metabolite biosynthesis. Functionally, citrate synthase-like protein; part of the gene cluster that mediates the biosynthesis of squalestatin S1 (SQS1, also known as zaragozic acid A), a heavily oxidized fungal polyketide that offers potent cholesterol lowering activity by targeting squalene synthase (SS). SQS1 is composed of a 2,8-dioxobicyclic[3.2.1]octane-3,4,5-tricarboxyclic acid core that is connected to two lipophilic polyketide arms. These initial steps feature the priming of an unusual benzoic acid starter unit onto the highly reducing polyketide synthase pks2, followed by oxaloacetate extension and product release to generate a tricarboxylic acid containing product. The phenylalanine ammonia lyase (PAL) M7 and the acyl-CoA ligase M9 are involved in transforming phenylalanine into benzoyl-CoA. The citrate synthase-like protein R3 is involved in connecting the C-alpha-carbons of the hexaketide chain and oxaloacetate to afford the tricarboxylic acid unit. The potential hydrolytic enzymes, M8 and M10, are in close proximity to pks2 and may participate in product release. On the other side, the tetraketide arm is synthesized by a the squalestatin tetraketide synthase pks1 and enzymatically esterified to the core in the last biosynthetic step, by the acetyltransferase M4. The biosynthesis of the tetraketide must involve 3 rounds of chain extension. After the first and second rounds methyl-transfer occurs, and in all rounds of extension the ketoreductase and dehydratase are active. The enoyl reductase and C-MeT of pks1 are not active in the final round of extension. The acetyltransferase M4 appears to have a broad substrate selectivity for its acyl CoA substrate, allowing the in vitro synthesis of novel squalestatins. The biosynthesis of SQS1 requires several oxidative steps likely performed by oxidoreductases M1, R1 and R2. Finally, in support of the identification of the cluster as being responsible for SQS1 production, the cluster contains a gene encoding a putative squalene synthase (SS) R6, suggesting a likely mechanism for self-resistance. This is Citrate synthase-like protein from Phoma sp. (strain ATCC 20986 / MF5453).